A 374-amino-acid chain; its full sequence is Zinc finger CCCH domain-containing protein 15 homolog (374 aa).

Residues 1-20 (MPPKQQGPSKKSEQKRKEKV) form a disordered region. Residues 10-20 (KKSEQKRKEKV) show a composition bias toward basic and acidic residues. 2 consecutive C3H1-type zinc fingers follow at residues 90 to 117 (DPKS…HDLA) and 166 to 199 (VCKY…HCLP).

It belongs to the ZC3H15/TMA46 family.

This is Zinc finger CCCH domain-containing protein 15 homolog from Caenorhabditis elegans.